The chain runs to 288 residues: 3'-5' exonuclease (288 aa).

Residues 30–67 (RSSSSSSSAAPTVQATTSVHGHEEDPNQIPNNIRRQLP) are disordered. 2 stretches are compositionally biased toward polar residues: residues 38 to 48 (AAPTVQATTSV) and 57 to 67 (QIPNNIRRQLP). A 3'-5' exonuclease domain is found at 129-279 (FVGLDIEWRP…ASWHLYKVLK (151 aa)).

Interacts with KU70 and KU80. Interacts with RECQL2. Mg(2+) is required as a cofactor. Requires Mn(2+) as cofactor. Expressed ubiquitously.

It is found in the nucleus. Activated upon interaction with the KU heterodimer. Not stimulated by ATP. Its function is as follows. Exonuclease that digests recessed strands of DNA duplexes in the 3' to 5' direction but hardly single-stranded DNA or blunt-ended duplexes. Also able to digest 3'-protruding strands and 3'-recessed strand termini of duplexes containing mismatched bases. In Arabidopsis thaliana (Mouse-ear cress), this protein is 3'-5' exonuclease (WEX).